Consider the following 360-residue polypeptide: Phospho-N-acetylmuramoyl-pentapeptide-transferase (360 aa).

10 helical membrane-spanning segments follow: residues 26 to 46 (SIMA…KVIN), 73 to 93 (TMGG…WADL), 98 to 118 (VWFT…DDYW), 132 to 152 (WKYF…YAMG), 168 to 188 (VMPQ…VGTS), 199 to 219 (GLAI…AWAT), 236 to 256 (SGEL…FLWY), 263 to 283 (VFMG…IAVL), 288 to 308 (LLLL…ILQV), and 338 to 358 (VIVR…VTLK).

This sequence belongs to the glycosyltransferase 4 family. MraY subfamily. Mg(2+) serves as cofactor.

The protein localises to the cell inner membrane. It catalyses the reaction UDP-N-acetyl-alpha-D-muramoyl-L-alanyl-gamma-D-glutamyl-meso-2,6-diaminopimeloyl-D-alanyl-D-alanine + di-trans,octa-cis-undecaprenyl phosphate = di-trans,octa-cis-undecaprenyl diphospho-N-acetyl-alpha-D-muramoyl-L-alanyl-D-glutamyl-meso-2,6-diaminopimeloyl-D-alanyl-D-alanine + UMP. Its pathway is cell wall biogenesis; peptidoglycan biosynthesis. In terms of biological role, catalyzes the initial step of the lipid cycle reactions in the biosynthesis of the cell wall peptidoglycan: transfers peptidoglycan precursor phospho-MurNAc-pentapeptide from UDP-MurNAc-pentapeptide onto the lipid carrier undecaprenyl phosphate, yielding undecaprenyl-pyrophosphoryl-MurNAc-pentapeptide, known as lipid I. This Haemophilus ducreyi (strain 35000HP / ATCC 700724) protein is Phospho-N-acetylmuramoyl-pentapeptide-transferase.